Here is a 328-residue protein sequence, read N- to C-terminus: Spermatogenesis- and oogenesis-specific basic helix-loop-helix-containing protein 1 (328 aa).

In terms of domain architecture, bHLH spans 53–104 (SCLRRNVISERERRKRMSLSCERLRALLPQFDGRREDMASVLEMSVQFLRLA). The tract at residues 290–328 (EAGSALGSDVDDGTSFLLTAGPSSWPGEWGPGFRAGPPA) is disordered. Over residues 310–321 (GPSSWPGEWGPG) the composition is skewed to low complexity.

As to quaternary structure, forms both hetero- and homodimers with SOHLH2.

Its subcellular location is the cytoplasm. It is found in the nucleus. Its function is as follows. Transcription regulator of both male and female germline differentiation. Suppresses genes involved in spermatogonial stem cells maintenance, and induces genes important for spermatogonial differentiation. Coordinates oocyte differentiation without affecting meiosis I. This chain is Spermatogenesis- and oogenesis-specific basic helix-loop-helix-containing protein 1 (SOHLH1), found in Homo sapiens (Human).